The chain runs to 516 residues: Signal recognition particle protein (516 aa).

GTP is bound by residues 108 to 115 (GLQGAGKT), 191 to 195 (DTAGR), and 249 to 252 (TKID). A disordered region spans residues 383 to 405 (MTPEERENPDLLTPSRRRRIASG).

Belongs to the GTP-binding SRP family. SRP54 subfamily. Part of the signal recognition particle protein translocation system, which is composed of SRP and FtsY.

The protein resides in the cytoplasm. The catalysed reaction is GTP + H2O = GDP + phosphate + H(+). Its function is as follows. Involved in targeting and insertion of nascent membrane proteins into the cytoplasmic membrane. Binds to the hydrophobic signal sequence of the ribosome-nascent chain (RNC) as it emerges from the ribosomes. The SRP-RNC complex is then targeted to the cytoplasmic membrane where it interacts with the SRP receptor FtsY. This Streptococcus mutans serotype c (strain ATCC 700610 / UA159) protein is Signal recognition particle protein.